Here is a 579-residue protein sequence, read N- to C-terminus: MFS-type transporter olcL (579 aa).

A compositionally biased stretch (polar residues) spans 1 to 24 (MANIGGSNAVSSAQGSQISDSPTT). Residues 1 to 75 (MANIGGSNAV…GFGEDGCQSD (75 aa)) are disordered. The segment covering 25-35 (VDDRLDEHKET) has biased composition (basic and acidic residues). A compositionally biased stretch (polar residues) spans 36-54 (STQSIDHSENITQSPTSLQ). N-linked (GlcNAc...) asparagine glycosylation occurs at Asn45. 9 helical membrane passes run 85–105 (LAAI…DNTI), 121–141 (GDVG…TLVF), 159–179 (AVFE…GLII), 183–203 (IAGL…SQSV), 214–234 (LVGG…GAFT), 241–261 (WCFY…LLFF), 282–302 (LIGL…LQWG), 310–330 (SGRI…FIMV), and 355–375 (LFNF…PVWF). N-linked (GlcNAc...) asparagine glycosylation is present at Asn380. 5 helical membrane passes run 388–408 (LMNL…GYGV), 411–431 (IGYY…GAGL), 439–459 (FGPS…GLGL), 479–501 (IAIV…QNVF), and 553–573 (FYVG…IQWI).

Belongs to the major facilitator superfamily. TCR/Tet family.

The protein resides in the peroxisome membrane. In terms of biological role, MFS-type transporter; part of the gene cluster that mediates the biosynthesis of 15-deoxyoxalicine B. The first step of the pathway is the synthesis of nicotinyl-CoA from nicotinic acid by the nicotinic acid-CoA ligase olcI. Nicotinyl-CoA is then a substrate of polyketide synthase olcA to produce 4-hydroxy-6-(3-pyridinyl)-2H-pyran-2-one (HPPO) which is further prenylated by the polyprenyl transferase olcH to yield geranylgeranyl-HPPO. Geranylgeranyl pyrophosphate is provided by the cluster-specific geranylgeranyl pyrophosphate synthase olcC. The FAD-dependent monooxygenase olcE catalyzes the epoxidation of geranylgeranyl-HPPO and the terpene cyclase olcD catalyzes the cyclization of the terpenoid component, resulting in the formation of the tricyclic terpene moiety seen in predecaturin E. The cytochrome P450 monooxygenase then catalyzes the allylic oxidation of predecaturin E, which is followed by spirocylization with concomitant loss of one molecule of water to form decaturin E. Decaturin E is the substrate of the cytochrome P450 monooxygenase olcJ which hydroxylates it at the C-29 position to form decaturin F. The short-chain dehydrogenase/reductase olcF may catalyze the oxidation of decaturin F to generate the 29-hydroxyl-27-one intermediate, and subsequent hemiacetal formation probably leads to the formation of decaturin C. The dioxygenase olcK may be a peroxisomal enzyme that catalyzes the hydroxylation of decaturin C into decaturin A once decaturin C is shuttled into the peroxisome by the MFS transporter olcL. Finally the cytochrome P450 monooxygenase olcB catalyzes the oxidative rearrangement to yield 15-deoxyoxalicine B. In the absence of olcJ, decaturin E may be shunted to a pathway in which it is oxidized to a ketone, possibly by olcF, to form decaturin D, which undergoes further allylic oxidation to yield decaturin G. Moreover, in the absence of oclK or oclL, oclB can convert decaturin C into 15-deoxyoxalicine A. This is MFS-type transporter olcL from Penicillium canescens.